The chain runs to 163 residues: Peptidyl-prolyl cis-trans isomerase (163 aa).

Residues 5 to 162 form the PPIase cyclophilin-type domain; the sequence is YFDVSSNGKP…SVLKIEDCGT (158 aa).

Belongs to the cyclophilin-type PPIase family. PPIase A subfamily.

The protein resides in the cytoplasm. The enzyme catalyses [protein]-peptidylproline (omega=180) = [protein]-peptidylproline (omega=0). Binds cyclosporin A (CsA). CsA mediates some of its effects via an inhibitory action on PPIase. PPIases accelerate the folding of proteins. It catalyzes the cis-trans isomerization of proline imidic peptide bonds in oligopeptides. This is Peptidyl-prolyl cis-trans isomerase (PIG28) from Uromyces fabae (Rust fungus).